We begin with the raw amino-acid sequence, 435 residues long: Asparagine--tRNA ligase (435 aa).

It belongs to the class-II aminoacyl-tRNA synthetase family. As to quaternary structure, homodimer.

Its subcellular location is the cytoplasm. It catalyses the reaction tRNA(Asn) + L-asparagine + ATP = L-asparaginyl-tRNA(Asn) + AMP + diphosphate + H(+). The protein is Asparagine--tRNA ligase of Leptospira interrogans serogroup Icterohaemorrhagiae serovar copenhageni (strain Fiocruz L1-130).